Here is a 97-residue protein sequence, read N- to C-terminus: Putative defensin-like protein 237 (97 aa).

The first 23 residues, 1-23 (MRHATSPIVFCFLIFLVMNHVKG), serve as a signal peptide directing secretion. 4 disulfides stabilise this stretch: Cys-30/Cys-94, Cys-40/Cys-71, Cys-48/Cys-84, and Cys-69/Cys-86.

Belongs to the DEFL family.

It localises to the secreted. The chain is Putative defensin-like protein 237 (SCRL21) from Arabidopsis thaliana (Mouse-ear cress).